The sequence spans 278 residues: Pantothenate synthetase (278 aa).

ATP is bound at residue 30 to 37 (MGGLHQGH). Histidine 37 acts as the Proton donor in catalysis. Glutamine 61 is a binding site for (R)-pantoate. Glutamine 61 contacts beta-alanine. 146–149 (GQKD) serves as a coordination point for ATP. Glutamine 152 contacts (R)-pantoate. Residues isoleucine 175 and 183–186 (MSTR) each bind ATP.

It belongs to the pantothenate synthetase family. Homodimer.

Its subcellular location is the cytoplasm. The catalysed reaction is (R)-pantoate + beta-alanine + ATP = (R)-pantothenate + AMP + diphosphate + H(+). It functions in the pathway cofactor biosynthesis; (R)-pantothenate biosynthesis; (R)-pantothenate from (R)-pantoate and beta-alanine: step 1/1. Catalyzes the condensation of pantoate with beta-alanine in an ATP-dependent reaction via a pantoyl-adenylate intermediate. The sequence is that of Pantothenate synthetase from Ruthia magnifica subsp. Calyptogena magnifica.